The following is a 411-amino-acid chain: Probable UDP-arabinose 4-epimerase 3 (411 aa).

Polar residues predominate over residues 1 to 13 (MLSFSRARSQGRN). Positions 1–22 (MLSFSRARSQGRNTRPLGGGME) are disordered. At 1 to 31 (MLSFSRARSQGRNTRPLGGGMEYLEPKRKSN) the chain is on the cytoplasmic side. Residues 32 to 50 (VMGKIILVVSLTALCIFML) form a helical; Signal-anchor for type II membrane protein membrane-spanning segment. Residues 51–411 (KHAPSFTSPT…KTHPHGYASS (361 aa)) are Lumenal-facing. NAD(+) is bound at residue 71–102 (HVLVTGGAGYIGSHAALRLLKDSYRVTIVDNL). Tyrosine 219 acts as the Proton acceptor in catalysis.

This sequence belongs to the NAD(P)-dependent epimerase/dehydratase family. The cofactor is NAD(+).

It is found in the golgi apparatus. The protein localises to the golgi stack membrane. The catalysed reaction is UDP-beta-L-arabinopyranose = UDP-alpha-D-xylose. It functions in the pathway nucleotide-sugar biosynthesis; UDP-L-arabinose biosynthesis; UDP-L-arabinose from UDP-alpha-D-xylose: step 1/1. It participates in cell wall biogenesis; cell wall polysaccharide biosynthesis. This Arabidopsis thaliana (Mouse-ear cress) protein is Probable UDP-arabinose 4-epimerase 3.